The following is a 235-amino-acid chain: Small ribosomal subunit protein uS3 (235 aa).

Residues 39–107 enclose the KH type-2 domain; that stretch reads VRKFLLGQLS…PTKLNISEIR (69 aa).

This sequence belongs to the universal ribosomal protein uS3 family. As to quaternary structure, part of the 30S ribosomal subunit. Forms a tight complex with proteins S10 and S14.

Binds the lower part of the 30S subunit head. Binds mRNA in the 70S ribosome, positioning it for translation. The sequence is that of Small ribosomal subunit protein uS3 from Blochmanniella floridana.